Reading from the N-terminus, the 517-residue chain is MSQQVIIFDTTLRDGEQALQASLNVKEKLQIAFALERLGVDIMEVGFPISSPGDFESVHTIAQKIKNSLVCALARCIDNDIDVAAEALKVAKNFRIHIFLPTSNVHIQSKLKKNFDQIIDMTVHAIRYARKYTDDIEFSCEDAGRTNIDNLCRIVEIAIQSGASTINIPDTVGYTTPYQFGQIITSLYNRVPIIDKAIISVHCHDDLGMAVGNSISAIQAGARQIEGTINGIGERAGNTALEEIIMAIKVREDLLNVHTNVRCQEIYRASQVVSQLCNIPIPANKAIVGSNAFSHSAGIHQDGILKNRKNYEIMTPETIGLKDVKLNLTSRSGRAAVKHHMKTMGYQESDYDMDKLYDVFLELADKKGQVFDYDLEALAFINNQQEQSEFFRLKCFHVDSSSSEVAHASVKLYCGNNTYTHSSSGNGPIDAIYEALTHISKLSINLERYQLNAKGHGRNALGQVDIVVSYEGRNFHGVGLDTDVIKSSVKAMIHVLNNIWRAKQVIIQRKYIKKNNN.

Residues 5–267 (VIIFDTTLRD…HTNVRCQEIY (263 aa)) enclose the Pyruvate carboxyltransferase domain. Residues Asp-14, His-202, His-204, and Asn-238 each coordinate Mn(2+). The segment at 392-517 (RLKCFHVDSS…QRKYIKKNNN (126 aa)) is regulatory domain.

The protein belongs to the alpha-IPM synthase/homocitrate synthase family. LeuA type 1 subfamily. Homodimer. Requires Mn(2+) as cofactor.

The protein resides in the cytoplasm. It carries out the reaction 3-methyl-2-oxobutanoate + acetyl-CoA + H2O = (2S)-2-isopropylmalate + CoA + H(+). It participates in amino-acid biosynthesis; L-leucine biosynthesis; L-leucine from 3-methyl-2-oxobutanoate: step 1/4. In terms of biological role, catalyzes the condensation of the acetyl group of acetyl-CoA with 3-methyl-2-oxobutanoate (2-ketoisovalerate) to form 3-carboxy-3-hydroxy-4-methylpentanoate (2-isopropylmalate). This is 2-isopropylmalate synthase from Blochmanniella pennsylvanica (strain BPEN).